The sequence spans 62 residues: Arabinogalactan protein 40 (62 aa).

The N-terminal stretch at 1–22 (MEMKNIFVALFISAVLVSSVSA) is a signal peptide. 3 positions are modified to 4-hydroxyproline: proline 28, proline 30, and proline 32. Residues proline 28, proline 30, and proline 32 are each glycosylated (O-linked (Ara...) hydroxyproline). Residue serine 35 is the site of GPI-anchor amidated serine attachment. The propeptide at 36 to 62 (SASTVAFPVVGSIVAASLSAFLALLLQ) is removed in mature form.

The protein belongs to the AG-peptide AGP family. In terms of processing, contains 4-hydroxyproline; hydroxylated on Pro-28, Pro-30 and Pro-32. Post-translationally, O-glycosylated on hydroxyprolines; noncontiguous hydroxylproline residues are glycosylated with arabinogalactan.

It is found in the cell membrane. Functionally, proteoglycan that seems to be implicated in diverse developmental roles such as differentiation, cell-cell recognition, embryogenesis and programmed cell death. In Arabidopsis thaliana (Mouse-ear cress), this protein is Arabinogalactan protein 40.